Here is a 536-residue protein sequence, read N- to C-terminus: Anthranilate synthase component 1 2 (536 aa).

L-tryptophan-binding positions include serine 59 and 299–301 (PYM). Residue 334-335 (GT) coordinates chorismate. Position 361 (glutamate 361) interacts with Mg(2+). Residues tyrosine 449, arginine 469, 487–489 (GAG), and glycine 489 contribute to the chorismate site. Glutamate 502 contributes to the Mg(2+) binding site.

The protein belongs to the anthranilate synthase component I family. In terms of assembly, tetramer of two components I and two components II. It depends on Mg(2+) as a cofactor.

The catalysed reaction is chorismate + L-glutamine = anthranilate + pyruvate + L-glutamate + H(+). The protein operates within amino-acid biosynthesis; L-tryptophan biosynthesis; L-tryptophan from chorismate: step 1/5. The chain is Anthranilate synthase component 1 2 (trpE2) from Haloarcula marismortui (strain ATCC 43049 / DSM 3752 / JCM 8966 / VKM B-1809) (Halobacterium marismortui).